Consider the following 752-residue polypeptide: Polyribonucleotide nucleotidyltransferase (752 aa).

Positions 519 and 525 each coordinate Mg(2+). The 60-residue stretch at 585 to 644 folds into the KH domain; it reads PRVIAVKIPVDKIGEVIGPKGKMINQIQEDTGADISIEDDGTVYIGATNGPSADAARSAI. An S1 motif domain is found at 656–728; it reads GERYLGTVVK…DRGKLSLSPV (73 aa). The interval 727–752 is disordered; that stretch reads PVVAEEEGAEGAERAHATEPAEGAEI.

It belongs to the polyribonucleotide nucleotidyltransferase family. The cofactor is Mg(2+).

It localises to the cytoplasm. The catalysed reaction is RNA(n+1) + phosphate = RNA(n) + a ribonucleoside 5'-diphosphate. Functionally, involved in mRNA degradation. Catalyzes the phosphorolysis of single-stranded polyribonucleotides processively in the 3'- to 5'-direction. The polypeptide is Polyribonucleotide nucleotidyltransferase (Pseudarthrobacter chlorophenolicus (strain ATCC 700700 / DSM 12829 / CIP 107037 / JCM 12360 / KCTC 9906 / NCIMB 13794 / A6) (Arthrobacter chlorophenolicus)).